Here is a 204-residue protein sequence, read N- to C-terminus: General stress protein Ctc (204 aa).

Residues isoleucine 177 to glutamine 204 are disordered. The segment covering alanine 186–glutamine 204 has biased composition (acidic residues).

It belongs to the bacterial ribosomal protein bL25 family. CTC subfamily. As to quaternary structure, part of the ribosome (presumably the 50S subunit) under heat-stress but not control growth conditions. Binds 5S rRNA.

Its function is as follows. Not required for exponential growth; probably functions in vegetatively growing cells, maybe required for accurate translation under stress conditions. This is General stress protein Ctc from Bacillus subtilis (strain 168).